The chain runs to 420 residues: Exodeoxyribonuclease 7 large subunit (420 aa).

Belongs to the XseA family. Heterooligomer composed of large and small subunits.

It localises to the cytoplasm. It carries out the reaction Exonucleolytic cleavage in either 5'- to 3'- or 3'- to 5'-direction to yield nucleoside 5'-phosphates.. Its function is as follows. Bidirectionally degrades single-stranded DNA into large acid-insoluble oligonucleotides, which are then degraded further into small acid-soluble oligonucleotides. The protein is Exodeoxyribonuclease 7 large subunit of Helicobacter pylori (strain ATCC 700392 / 26695) (Campylobacter pylori).